The chain runs to 404 residues: Cysteine desulfurase IscS (404 aa).

Pyridoxal 5'-phosphate is bound by residues 75 to 76 (AT), asparagine 155, glutamine 183, and 203 to 205 (SAH). Lysine 206 bears the N6-(pyridoxal phosphate)lysine mark. Threonine 243 serves as a coordination point for pyridoxal 5'-phosphate. The active-site Cysteine persulfide intermediate is the cysteine 328. A [2Fe-2S] cluster-binding site is contributed by cysteine 328.

This sequence belongs to the class-V pyridoxal-phosphate-dependent aminotransferase family. NifS/IscS subfamily. Homodimer. Forms a heterotetramer with IscU, interacts with other sulfur acceptors. Requires pyridoxal 5'-phosphate as cofactor.

It localises to the cytoplasm. The catalysed reaction is (sulfur carrier)-H + L-cysteine = (sulfur carrier)-SH + L-alanine. Its pathway is cofactor biosynthesis; iron-sulfur cluster biosynthesis. Master enzyme that delivers sulfur to a number of partners involved in Fe-S cluster assembly, tRNA modification or cofactor biosynthesis. Catalyzes the removal of elemental sulfur atoms from cysteine to produce alanine. Functions as a sulfur delivery protein for Fe-S cluster synthesis onto IscU, an Fe-S scaffold assembly protein, as well as other S acceptor proteins. This chain is Cysteine desulfurase IscS, found in Azotobacter vinelandii (strain DJ / ATCC BAA-1303).